A 384-amino-acid chain; its full sequence is uncharacterized protein (384 aa).

The span at 327-339 shows a compositional bias: basic residues; it reads KKEKKEKKEKKPK. The tract at residues 327-358 is disordered; it reads KKEKKEKKEKKPKKAVEEEPKQYLTPEFVNDD.

This is an uncharacterized protein from Magallana gigas (Pacific oyster).